A 1192-amino-acid chain; its full sequence is DNA ligase 1 (1192 aa).

Disordered stretches follow at residues 29–257 and 280–517; these read ELNK…KEKE and EKEL…KSTQ. Residues 42-56 show a composition bias toward basic and acidic residues; that stretch reads EAVVKEKVEKKEKKE. Acidic residues predominate over residues 70–113; sequence EEEEEEQEEQDGEEEQEEEEEYQQQDEEIEEDINGEEEMELDEN. Over residues 141 to 155 the composition is skewed to basic and acidic residues; it reads KTIENKETKKPEKQS. The segment covering 172 to 198 has biased composition (acidic residues); that stretch reads DDEEDEEDENKTDDNDLDDMLDDDSDN. Basic and acidic residues-rich tracts occupy residues 199–257 and 280–368; these read EKDS…KEKE and EKEL…RANA. Low complexity-rich tracts occupy residues 371 to 382 and 410 to 434; these read KSSVPTSTSKNS and STTT…ISSP. The span at 435 to 467 shows a compositional bias: basic and acidic residues; the sequence is SKKEEKEVITSKKQVEATKVEVKKEKEKEKEKE. Over residues 468 to 511 the composition is skewed to acidic residues; sequence KEDDEEEEEEEEDDDEKLEDIDEEEYEEEEEEDEEGISENEEEE. The segment at 724–733 is interaction with target DNA; it reads KLRIGLAERS. Glu-842 is an ATP binding site. The active-site N6-AMP-lysine intermediate is Lys-844. 2 residues coordinate ATP: Arg-849 and Arg-865. Position 897 (Glu-897) interacts with Mg(2+). The tract at residues 918–920 is interaction with target DNA; sequence ARK. Glu-996 is a binding site for Mg(2+). 3 residues coordinate ATP: Lys-1001, Arg-1014, and Lys-1020. Residues 1157 to 1192 form a disordered region; that stretch reads DKSPEDATSSDQVVDMYQNQKINSQSSKINEKDEDY. A compositionally biased stretch (polar residues) spans 1162–1184; that stretch reads DATSSDQVVDMYQNQKINSQSSK.

This sequence belongs to the ATP-dependent DNA ligase family. Mg(2+) serves as cofactor.

Its subcellular location is the nucleus. It carries out the reaction ATP + (deoxyribonucleotide)n-3'-hydroxyl + 5'-phospho-(deoxyribonucleotide)m = (deoxyribonucleotide)n+m + AMP + diphosphate.. Functionally, DNA ligase that seals nicks in double-stranded DNA during DNA replication, DNA recombination and DNA repair. The protein is DNA ligase 1 (lig1) of Dictyostelium discoideum (Social amoeba).